The sequence spans 450 residues: Chromosomal replication initiator protein DnaA (450 aa).

Residues 1 to 69 form a domain I, interacts with DnaA modulators region; the sequence is MHDVWRQATE…VGALSVTAGK (69 aa). The segment at 69 to 113 is domain II; the sequence is KKYFIELVVQEEDQNAEVPQAEDLIIKGHQEIEQPVTSQPETSSS. A domain III, AAA+ region region spans residues 114–330; it reads SLNPKYTFEL…GMLIRLGAYS (217 aa). Residues Gly-158, Gly-160, Lys-161, and Ser-162 each coordinate ATP. Residues 331-450 are domain IV, binds dsDNA; that stretch reads SLQGIPITLD…IEDIKLILLK (120 aa).

The protein belongs to the DnaA family. Oligomerizes as a right-handed, spiral filament on DNA at oriC.

The protein localises to the cytoplasm. Functionally, plays an essential role in the initiation and regulation of chromosomal replication. ATP-DnaA binds to the origin of replication (oriC) to initiate formation of the DNA replication initiation complex once per cell cycle. Binds the DnaA box (a 9 base pair repeat at the origin) and separates the double-stranded (ds)DNA. Forms a right-handed helical filament on oriC DNA; dsDNA binds to the exterior of the filament while single-stranded (ss)DNA is stabiized in the filament's interior. The ATP-DnaA-oriC complex binds and stabilizes one strand of the AT-rich DNA unwinding element (DUE), permitting loading of DNA polymerase. After initiation quickly degrades to an ADP-DnaA complex that is not apt for DNA replication. Binds acidic phospholipids. The chain is Chromosomal replication initiator protein DnaA from Pelobacter propionicus (strain DSM 2379 / NBRC 103807 / OttBd1).